A 1302-amino-acid polypeptide reads, in one-letter code: Ubiquitin conjugation factor E4 B (1302 aa).

An N-acetylmethionine modification is found at Met1. The disordered stretch occupies residues 1-155 (MEELSADEIR…EPSSGPEVSE (155 aa)). Over residues 16 to 33 (RLAGGQTSQPTTPLTSPQ) the composition is skewed to low complexity. Phosphoserine is present on residues Ser23 and Ser31. Residues 51 to 64 (QSLGLNVHNMTPAT) are compositionally biased toward polar residues. A compositionally biased stretch (low complexity) spans 76–99 (SQSSEGVSSLSSSPSNSLETQSQS). 7 positions are modified to phosphoserine: Ser84, Ser88, Ser90, Ser101, Ser103, Ser105, and Ser124. The span at 134–147 (NDRREKRSLSDKEP) shows a compositional bias: basic and acidic residues. Position 238 is a phosphoserine (Ser238). The segment covering 299–327 (AASQLAVPSTPLSPHSAASGTAAGSQPSS) has biased composition (polar residues). Residues 299–406 (AASQLAVPST…SPSLGASGGA (108 aa)) are disordered. Low complexity predominate over residues 340–374 (ASSGVSILSSSPSPPALASSPQAVPASSSRQRPSS). Ser383 carries the phosphoserine modification. Residues 384–400 (PSATSRRPSSLRISPSL) show a composition bias toward low complexity. Ser803 and Ser969 each carry phosphoserine. Residues 1057–1077 (NKEQWDQLPRDQQQARQSQLA) are disordered. A compositionally biased stretch (low complexity) spans 1066 to 1077 (RDQQQARQSQLA). Positions 1227-1300 (DAPDEFRDPL…QAWMREKQNS (74 aa)) constitute a U-box domain. Phosphoserine is present on Ser1265.

The protein belongs to the ubiquitin conjugation factor E4 family. Interacts with VCP/p97. Interacts with STUB1/CHIP and UNC45B. Post-translationally, proteolytically cleaved by caspases during apoptosis. Cleaved efficiently at Asp-123 by caspase-6 and granzyme B. Cleaved with approximately 10-fold less efficiency at Asp-109 by caspase-3 and caspase-7. As to expression, expressed in differentiated myotubes (at protein level). Highest expression in ovary, testis, heart and skeletal muscle. Expression is low in colon, thymus and peripheral blood leukocytes. Almost undetectable in lung and spleen.

The protein resides in the cytoplasm. It localises to the nucleus. The enzyme catalyses S-ubiquitinyl-[E2 ubiquitin-conjugating enzyme]-L-cysteine + [acceptor protein]-L-lysine = [E2 ubiquitin-conjugating enzyme]-L-cysteine + N(6)-ubiquitinyl-[acceptor protein]-L-lysine.. It participates in protein modification; protein ubiquitination. Its function is as follows. Ubiquitin-protein ligase that probably functions as an E3 ligase in conjunction with specific E1 and E2 ligases. May also function as an E4 ligase mediating the assembly of polyubiquitin chains on substrates ubiquitinated by another E3 ubiquitin ligase. May regulate myosin assembly in striated muscles together with STUB1 and VCP/p97 by targeting myosin chaperone UNC45B for proteasomal degradation. The chain is Ubiquitin conjugation factor E4 B from Homo sapiens (Human).